A 62-amino-acid chain; its full sequence is Large ribosomal subunit protein bL28 (62 aa).

Residues 1-27 are disordered; sequence MARECYITGRKARSGNKRSHAMNKSKR. Residues 10–27 show a composition bias toward basic residues; it reads RKARSGNKRSHAMNKSKR.

It belongs to the bacterial ribosomal protein bL28 family.

The chain is Large ribosomal subunit protein bL28 from Shouchella clausii (strain KSM-K16) (Alkalihalobacillus clausii).